The sequence spans 505 residues: MILFTAIILVASVVHVVVSSPQQCYYCVEDDCETMSLWINQTCATSQRSLGTSHCGTAAVRYHEGYLGGVPLETTVKGCFDCTDKSAACFALAGLLKSSLGWVVQQCDINCCNDTNCNTNVTILSQNATNVLRRDAFGTTSCYECEESDNYTCILKQQSQTCRTSRAALGITHCSSAKVKTRNVLTGTVDVSFIRGCISCEDKKSACALLAGSFKFRKHATMLECDIECCNGSYCNDGAASLSKCFHCMEDDGLSCSARQQRQICSLDPESLGTTHCGSAVGRKRNQNGAIQNYFYRGCFDCSKKKEACFTLGGYWKGDVNAPGATTLLECELQCCDPNVINGSYCNVETPILKPAAITVFTPTVTGPAQCNVCLEKDETSCSENQQTQVCGIDPYSLGTTHCGSAVGRYRQSNGDMVYGFYRGCINCADKMAACAAVGGFRKNVQKWTQLQCEIECCTEDNCNTHTPRLVEVEQPNSAPRGEIHQLFRCTFVAVFIVFACFIVC.

The N-terminal stretch at 1–19 (MILFTAIILVASVVHVVVS) is a signal peptide. Residues 20–483 (SPQQCYYCVE…EQPNSAPRGE (464 aa)) lie on the Extracellular side of the membrane. Residues 484 to 504 (IHQLFRCTFVAVFIVFACFIV) traverse the membrane as a helical segment. C505 is a topological domain (cytoplasmic).

Component of the acid-insoluble and acid-soluble organic matrix of the aragonitic skeleton (at protein level).

It localises to the membrane. This is an uncharacterized protein from Acropora millepora (Staghorn coral).